The chain runs to 862 residues: Piwi-like protein 1 (862 aa).

Over residues 1-13 the composition is skewed to basic residues; sequence MTGRARARARGRA. The tract at residues 1–48 is disordered; that stretch reads MTGRARARARGRARGQETVQHVGAAASQQPGYIPPRPQQSPTEGDLVG. At arginine 14 the chain carries Omega-N-methylarginine; by PRMT5; alternate. A Symmetric dimethylarginine; by PRMT5; alternate modification is found at arginine 14. At arginine 49 the chain carries Omega-N-methylarginine; by PRMT5. The residue at position 53 (arginine 53) is an Omega-N-methylarginine; alternate. Arginine 53 is subject to Symmetric dimethylarginine; alternate. The D-box motif lies at 218 to 225; the sequence is RRLLKIMN. Residues 279–392 form the PAZ domain; the sequence is TVLDFMFNLY…LIPELCYLTG (114 aa). The required for binding 2'-O-methylated 3'-end of piRNAs stretch occupies residues 317-319; sequence TYR. Residue arginine 371 is modified to Omega-N-methylarginine; by PRMT5. Positions 480–616 are MID region; sequence SKETRGAPLI…LQMNCKMGGE (137 aa). The region spanning 556–848 is the Piwi domain; it reads IVVCLLSSNR…LAFLVGQSIH (293 aa). Active-site residues include aspartate 633, glutamate 671, aspartate 703, and histidine 837.

It belongs to the argonaute family. Piwi subfamily. As to quaternary structure, interacts (via Piwi domain) with DICER1, suggesting that it forms ribonucleoprotein RISC complexes; this interaction is regulated by HSP90AB1 activity. Interacts with MAEL, KIF17, PABPC1, PRMT5 and WDR77. Interacts (when methylated on arginine residues) with TDRD1, TDRKH/TDRD2, RNF17/TDRD4, TDRD6, TDRD7 and TDRD9. Interacts with CLOCK. Interacts with MOV10L1. Interacts with ANAPC10; interaction oly takes place following piRNA-binding. Interacts with RNF8; leading to sequester RNF8 in the cytoplasm. Interacts with Tex19.1 and, probably, Tex19.2. Requires Mg(2+) as cofactor. Ubiquitinated by the anaphase promoting complex/cyclosome (APC/C) in late spermatids, leading to its degradation. Ubiquitination only takes place following piRNA-binding in adult testis. Ubiquitination and degradation in late spermatogenesis by APC/C is probably required to release RNF8 from the cytoplasm and promote histone to protamine exchange by RNF8. Post-translationally, arginine methylation by PRMT5 is required for the interaction with Tudor domain-containing protein (TDRD1, TDRKH/TDRD2, RNF17/TDRD4, TDRD6, TDRD7 and TDRD9) and subsequent localization to the meiotic nuage, also named P granule. Expressed in brain. Expressed in testis, specifically in spermatocytes (at protein level). Only detected in germ lineage cells of adult testis. Expressed in male gonads 2 weeks after birth at the initiation of spermatogenesis, but not expressed in female gonads.

The protein resides in the cytoplasm. In terms of biological role, endoribonuclease that plays a central role in postnatal germ cells by repressing transposable elements and preventing their mobilization, which is essential for the germline integrity. Acts via the piRNA metabolic process, which mediates the repression of transposable elements during meiosis by forming complexes composed of piRNAs and Piwi proteins and governs the methylation and subsequent repression of transposons. Directly binds methylated piRNAs, a class of 24 to 30 nucleotide RNAs that are generated by a Dicer-independent mechanism and are primarily derived from transposons and other repeated sequence elements. Strongly prefers a uridine in the first position of their guide (g1U preference, also named 1U-bias). Not involved in the piRNA amplification loop, also named ping-pong amplification cycle. Acts as an endoribonuclease that cleaves transposon messenger RNAs. Besides their function in transposable elements repression, piRNAs are probably involved in other processes during meiosis such as translation regulation. Probable component of some RISC complex, which mediates RNA cleavage and translational silencing. Also plays a role in the formation of chromatoid bodies and is required for some miRNAs stability. Required to sequester RNF8 in the cytoplasm until late spermatogenesis; RNF8 being released upon ubiquitination and degradation of PIWIL1. This chain is Piwi-like protein 1, found in Mus musculus (Mouse).